The primary structure comprises 693 residues: Polyphosphate kinase (693 aa).

N57 serves as a coordination point for ATP. Mg(2+)-binding residues include R383 and R413. The active-site Phosphohistidine intermediate is the H443. ATP is bound by residues Y476, R572, and H601.

Belongs to the polyphosphate kinase 1 (PPK1) family. Mg(2+) is required as a cofactor. In terms of processing, an intermediate of this reaction is the autophosphorylated ppk in which a phosphate is covalently linked to a histidine residue through a N-P bond.

The catalysed reaction is [phosphate](n) + ATP = [phosphate](n+1) + ADP. In terms of biological role, catalyzes the reversible transfer of the terminal phosphate of ATP to form a long-chain polyphosphate (polyP). The sequence is that of Polyphosphate kinase from Acinetobacter baumannii (strain ATCC 17978 / DSM 105126 / CIP 53.77 / LMG 1025 / NCDC KC755 / 5377).